Consider the following 668-residue polypeptide: MTLYDENNLHIIKDNLRYLKLLSKQYPSISSASSEIINLQAILNLPKGTEHFISDVHGEYESFTHMLKNASGVIKRKIDDVFGTSLRECDKRNLATLIYYPEQKLDLIKKSEKNLEDWYKITLYRLIRLCQIVSSKYTRSKVRKALPSDFAYIIEELLNEQGDRVDKQEYYNSIIETIIDIDRASEFIIAISNVIQRLVVDKLHIIGDIYDRGPGAEIIIEALSKHHSIDIQWGNHDIVWMGAAAGCEACIANVIRISLRYANLSTLEDGYGINLLPLATFAMDFYKEDNCENFKPRTIDKNLNKTDIKLLSKMHKAISIIQFKLEGKIIKRRPEFKMEERLLLDKINIKEGTLNLNEKIYKLIDTNFPTLDKENPYELNERERDLVEKLTNSFINSEKLQRHIKFLYSNGSLYLKYNSNLLYHGCIPLNEDGSLKEVTLCKETLKGKSLLDKLDRLAREAYFFKKDPESKLYGMDMMWYLWCGPNSPLFGKKKMTTFERYFLDDKDTHKEEKNPYYKYRNDEKMCTIIFEEFELDVDNSHIINGHIPVKTKEGENPIKANGKLLVIDGGFCKAYQPQTGIAGYTLIYNSYGLLLTSHEPFSSIHKAIVEGNDILSSTIILEHVSSRKRVLDTDSGEEIKKQIHDLEMLLVAYRKGLIKEENEANIRF.

The protein belongs to the FBPase class 3 family. Requires Mn(2+) as cofactor.

It carries out the reaction beta-D-fructose 1,6-bisphosphate + H2O = beta-D-fructose 6-phosphate + phosphate. The protein operates within carbohydrate biosynthesis; gluconeogenesis. This is Fructose-1,6-bisphosphatase class 3 from Clostridium botulinum (strain Loch Maree / Type A3).